A 141-amino-acid polypeptide reads, in one-letter code: Acetyltransferase ECA0875 (141 aa).

Residues 1-141 (MEIRIFRQDD…GKRLIEDREY (141 aa)) enclose the N-acetyltransferase domain.

The protein belongs to the acetyltransferase family. YpeA subfamily.

In Pectobacterium atrosepticum (strain SCRI 1043 / ATCC BAA-672) (Erwinia carotovora subsp. atroseptica), this protein is Acetyltransferase ECA0875.